Here is a 259-residue protein sequence, read N- to C-terminus: Undecaprenyl-diphosphatase 4 (259 aa).

The next 8 membrane-spanning stretches (helical) occupy residues 1–21 (MNWLEAFILGIIQGLTEFLPI), 39–59 (AGLFLDTMLHIGTLLAVFIYY), 71–91 (FSKLMLLLIVGTIPAVVIGLL), 99–119 (ISKTGITIGWEFLVTGFFLYV), 133–153 (ITYKDAFIIGSFQAAAIFPAI), 173–193 (AAYFSFLLSTPAIVGAIILQF), 208–228 (SLIVGTLSAAFFGYIAVSWMI), and 239–259 (FAYYVWGLGILILTLQFTDVF).

The protein belongs to the UppP family.

Its subcellular location is the cell membrane. It carries out the reaction di-trans,octa-cis-undecaprenyl diphosphate + H2O = di-trans,octa-cis-undecaprenyl phosphate + phosphate + H(+). Its function is as follows. Catalyzes the dephosphorylation of undecaprenyl diphosphate (UPP). Confers resistance to bacitracin. The protein is Undecaprenyl-diphosphatase 4 of Bacillus thuringiensis subsp. konkukian (strain 97-27).